We begin with the raw amino-acid sequence, 79 residues long: Sulfur carrier protein TusA (79 aa).

Cys17 acts as the Cysteine persulfide intermediate in catalysis.

It belongs to the sulfur carrier protein TusA family.

The protein resides in the cytoplasm. In terms of biological role, sulfur carrier protein which probably makes part of a sulfur-relay system. This Mannheimia succiniciproducens (strain KCTC 0769BP / MBEL55E) protein is Sulfur carrier protein TusA.